The primary structure comprises 622 residues: Condensin-2 complex subunit H2 (622 aa).

Residue Thr-19 is modified to Phosphothreonine. 4 positions are modified to phosphoserine: Ser-95, Ser-199, Ser-223, and Ser-227. The segment at 207–354 (WNPKEPGRAE…PGQKRKRKGA (148 aa)) is disordered. A compositionally biased stretch (low complexity) spans 262–273 (AAEPPEASAPEV). Ser-282 bears the Phosphoserine mark. Residues 294–312 (TLRERKEAPEPASRLKDTP) show a composition bias toward basic and acidic residues.

It belongs to the CND2 H2 (condensin-2 subunit 2) family. As to quaternary structure, component of the condensin-2 complex, which contains the SMC2 and SMC4 heterodimer, and three non SMC subunits, NCAPG2, NCAPH2 and NCAPD3 that probably regulate the complex.

The protein localises to the nucleus. Functionally, regulatory subunit of the condensin-2 complex, a complex that seems to provide chromosomes with an additional level of organization and rigidity and in establishing mitotic chromosome architecture. May promote the resolution of double-strand DNA catenanes (intertwines) between sister chromatids. Condensin-mediated compaction likely increases tension in catenated sister chromatids, providing directionality for type II topoisomerase-mediated strand exchanges toward chromatid decatenation. Required for decatenation of chromatin bridges at anaphase. Early in neurogenesis, may play an essential role to ensure accurate mitotic chromosome condensation in neuron stem cells, ultimately affecting neuron pool and cortex size. Seems to have lineage-specific role in T-cell development. In Bos taurus (Bovine), this protein is Condensin-2 complex subunit H2 (NCAPH2).